Reading from the N-terminus, the 332-residue chain is Glycerol-3-phosphate dehydrogenase [NAD(P)+] (332 aa).

Residues W11, R30, and K108 each coordinate NADPH. Positions 108, 137, and 139 each coordinate sn-glycerol 3-phosphate. Residue A141 participates in NADPH binding. Sn-glycerol 3-phosphate contacts are provided by K192, D245, S255, R256, and N257. K192 acts as the Proton acceptor in catalysis. An NADPH-binding site is contributed by R256. Residues V280 and E282 each contribute to the NADPH site.

This sequence belongs to the NAD-dependent glycerol-3-phosphate dehydrogenase family.

Its subcellular location is the cytoplasm. The enzyme catalyses sn-glycerol 3-phosphate + NAD(+) = dihydroxyacetone phosphate + NADH + H(+). The catalysed reaction is sn-glycerol 3-phosphate + NADP(+) = dihydroxyacetone phosphate + NADPH + H(+). The protein operates within membrane lipid metabolism; glycerophospholipid metabolism. Functionally, catalyzes the reduction of the glycolytic intermediate dihydroxyacetone phosphate (DHAP) to sn-glycerol 3-phosphate (G3P), the key precursor for phospholipid synthesis. This chain is Glycerol-3-phosphate dehydrogenase [NAD(P)+], found in Burkholderia pseudomallei (strain 1710b).